A 129-amino-acid chain; its full sequence is MGKAKVPRQLKDNEAKAVARTIRVSPQKLNLVVAMIRGKRVGVALADLAFSRKRIAGTVKKTLESAIANAENNHDLDIDSLIVAEAYVGKSVVVKRFHVRGRGRASRIERPFSHLTIIVREVTEKVEAA.

It belongs to the universal ribosomal protein uL22 family. In terms of assembly, part of the 50S ribosomal subunit.

In terms of biological role, this protein binds specifically to 23S rRNA; its binding is stimulated by other ribosomal proteins, e.g. L4, L17, and L20. It is important during the early stages of 50S assembly. It makes multiple contacts with different domains of the 23S rRNA in the assembled 50S subunit and ribosome. The globular domain of the protein is located near the polypeptide exit tunnel on the outside of the subunit, while an extended beta-hairpin is found that lines the wall of the exit tunnel in the center of the 70S ribosome. This Bartonella quintana (strain Toulouse) (Rochalimaea quintana) protein is Large ribosomal subunit protein uL22.